Here is a 103-residue protein sequence, read N- to C-terminus: Large ribosomal subunit protein uL24 (103 aa).

The tract at residues 70 to 103 (YLDPSTNEPTRLGVRREDGKRVRYAKKSGKDLEN) is disordered.

It belongs to the universal ribosomal protein uL24 family. Part of the 50S ribosomal subunit.

One of two assembly initiator proteins, it binds directly to the 5'-end of the 23S rRNA, where it nucleates assembly of the 50S subunit. In terms of biological role, one of the proteins that surrounds the polypeptide exit tunnel on the outside of the subunit. The protein is Large ribosomal subunit protein uL24 of Lactiplantibacillus plantarum (strain ATCC BAA-793 / NCIMB 8826 / WCFS1) (Lactobacillus plantarum).